The following is a 384-amino-acid chain: N-acetyldiaminopimelate deacetylase (384 aa).

Asp74 is an active-site residue. The Proton acceptor role is filled by Glu133.

This sequence belongs to the peptidase M20A family. N-acetyldiaminopimelate deacetylase subfamily.

The enzyme catalyses N-acetyl-(2S,6S)-2,6-diaminopimelate + H2O = (2S,6S)-2,6-diaminopimelate + acetate. It functions in the pathway amino-acid biosynthesis; L-lysine biosynthesis via DAP pathway; LL-2,6-diaminopimelate from (S)-tetrahydrodipicolinate (acetylase route): step 3/3. Functionally, catalyzes the conversion of N-acetyl-diaminopimelate to diaminopimelate and acetate. In Leuconostoc mesenteroides subsp. mesenteroides (strain ATCC 8293 / DSM 20343 / BCRC 11652 / CCM 1803 / JCM 6124 / NCDO 523 / NBRC 100496 / NCIMB 8023 / NCTC 12954 / NRRL B-1118 / 37Y), this protein is N-acetyldiaminopimelate deacetylase.